The primary structure comprises 87 residues: Small ribosomal subunit protein uS17 (87 aa).

Belongs to the universal ribosomal protein uS17 family. In terms of assembly, part of the 30S ribosomal subunit.

Functionally, one of the primary rRNA binding proteins, it binds specifically to the 5'-end of 16S ribosomal RNA. This chain is Small ribosomal subunit protein uS17, found in Macrococcus caseolyticus (strain JCSC5402) (Macrococcoides caseolyticum).